The sequence spans 56 residues: Ovomucoid (56 aa).

A Kazal-like domain is found at 6 to 56; sequence VDCSEYPKPACTLEYRPLCGSDSKTYANKCNFCNAVVESNGTLTLSHFGKC. 3 disulfides stabilise this stretch: cysteine 8–cysteine 38, cysteine 16–cysteine 35, and cysteine 24–cysteine 56. N-linked (GlcNAc...) asparagine glycosylation occurs at asparagine 45.

It localises to the secreted. This is Ovomucoid from Oreortyx pictus (Mountain quail).